Here is a 229-residue protein sequence, read N- to C-terminus: Pyridoxal phosphate homeostasis protein (229 aa).

K36 carries the N6-(pyridoxal phosphate)lysine modification.

It belongs to the pyridoxal phosphate-binding protein YggS/PROSC family. In terms of assembly, monomer.

In terms of biological role, pyridoxal 5'-phosphate (PLP)-binding protein, which is involved in PLP homeostasis. The polypeptide is Pyridoxal phosphate homeostasis protein (Buchnera aphidicola subsp. Schizaphis graminum (strain Sg)).